Here is a 318-residue protein sequence, read N- to C-terminus: tRNA pseudouridine synthase B (318 aa).

Asp47 functions as the Nucleophile in the catalytic mechanism.

Belongs to the pseudouridine synthase TruB family. Type 1 subfamily.

It catalyses the reaction uridine(55) in tRNA = pseudouridine(55) in tRNA. Its function is as follows. Responsible for synthesis of pseudouridine from uracil-55 in the psi GC loop of transfer RNAs. The sequence is that of tRNA pseudouridine synthase B from Colwellia psychrerythraea (strain 34H / ATCC BAA-681) (Vibrio psychroerythus).